Here is a 533-residue protein sequence, read N- to C-terminus: D-3-phosphoglycerate dehydrogenase (533 aa).

Residue Ala2 is modified to N-acetylalanine. Residue Ser14 is modified to Phosphoserine. N6-acetyllysine is present on Lys58. NAD(+) contacts are provided by residues Thr78, 155 to 156, Asp175, Thr207, 234 to 236, and Asp260; these read RI and CAR. Thr78 bears the Phosphothreonine mark. Arg236 is an active-site residue. Glu265 is an active-site residue. The active-site Proton donor is His283. NAD(+) is bound at residue 283-286; it reads HLGA.

This sequence belongs to the D-isomer specific 2-hydroxyacid dehydrogenase family. As to quaternary structure, homotetramer.

It catalyses the reaction (2R)-3-phosphoglycerate + NAD(+) = 3-phosphooxypyruvate + NADH + H(+). The enzyme catalyses (R)-2-hydroxyglutarate + NAD(+) = 2-oxoglutarate + NADH + H(+). It carries out the reaction (S)-malate + NAD(+) = oxaloacetate + NADH + H(+). It participates in amino-acid biosynthesis; L-serine biosynthesis; L-serine from 3-phospho-D-glycerate: step 1/3. Catalyzes the reversible oxidation of 3-phospho-D-glycerate to 3-phosphonooxypyruvate, the first step of the phosphorylated L-serine biosynthesis pathway. Also catalyzes the reversible oxidation of 2-hydroxyglutarate to 2-oxoglutarate and the reversible oxidation of (S)-malate to oxaloacetate. The polypeptide is D-3-phosphoglycerate dehydrogenase (PHGDH) (Sus scrofa (Pig)).